The sequence spans 144 residues: 3-dehydroquinate dehydratase (144 aa).

Y22 serves as the catalytic Proton acceptor. N73, H79, and D86 together coordinate substrate. H99 (proton donor) is an active-site residue. Substrate is bound by residues 100 to 101 (LS) and R110.

The protein belongs to the type-II 3-dehydroquinase family. As to quaternary structure, homododecamer.

It catalyses the reaction 3-dehydroquinate = 3-dehydroshikimate + H2O. It participates in metabolic intermediate biosynthesis; chorismate biosynthesis; chorismate from D-erythrose 4-phosphate and phosphoenolpyruvate: step 3/7. Catalyzes a trans-dehydration via an enolate intermediate. In Pelotomaculum thermopropionicum (strain DSM 13744 / JCM 10971 / SI), this protein is 3-dehydroquinate dehydratase.